Consider the following 187-residue polypeptide: UPF0301 protein SO_3346 (187 aa).

The protein belongs to the UPF0301 (AlgH) family.

The polypeptide is UPF0301 protein SO_3346 (Shewanella oneidensis (strain ATCC 700550 / JCM 31522 / CIP 106686 / LMG 19005 / NCIMB 14063 / MR-1)).